Consider the following 352-residue polypeptide: Peptide chain release factor 1 (352 aa).

Glutamine 233 is modified (N5-methylglutamine). Residues 288–309 (NAKDRKEQVGSGDRSERIRTYN) form a disordered region. Residues 289–306 (AKDRKEQVGSGDRSERIR) show a composition bias toward basic and acidic residues.

This sequence belongs to the prokaryotic/mitochondrial release factor family. Post-translationally, methylated by PrmC. Methylation increases the termination efficiency of RF1.

Its subcellular location is the cytoplasm. Peptide chain release factor 1 directs the termination of translation in response to the peptide chain termination codons UAG and UAA. The sequence is that of Peptide chain release factor 1 from Helicobacter pylori (strain HPAG1).